Reading from the N-terminus, the 231-residue chain is MRAFSNVSRISRVSRVSRVALAAPARTVPLMNRNAMSMMRFYSEDAKASEKAGEKAEEKAEEQNLSAEEQKLKDLQEQLDKKTKEAAELKDRLLRSVADFRNLQEVTKKDVEKAKSYALQKFAKDLLESVDNFGHALGAFKEEDLEKSKEISDLYTGVKMTRDVFEKTLKKYGIEKLDPLGERFDPNKHEATFELAQPDKEPGTVFHVQQLGYTLNERVIRPAKVGVVKED.

The segment at 49–71 (SEKAGEKAEEKAEEQNLSAEEQK) is disordered.

The protein belongs to the GrpE family. In terms of assembly, component of the PAM complex, at least composed of mtHsp70, MGE1, TIM44, PAM16, PAM17 and PAM18.

Its subcellular location is the mitochondrion matrix. In terms of biological role, essential component of the PAM complex, a complex required for the translocation of transit peptide-containing proteins from the inner membrane into the mitochondrial matrix in an ATP-dependent manner. Seems to control the nucleotide-dependent binding of SSC1 to substrate proteins. The sequence is that of GrpE protein homolog, mitochondrial (mge1) from Candida glabrata (strain ATCC 2001 / BCRC 20586 / JCM 3761 / NBRC 0622 / NRRL Y-65 / CBS 138) (Yeast).